The chain runs to 291 residues: tRNA dimethylallyltransferase (291 aa).

9–16 serves as a coordination point for ATP; it reads GPTASGKT. 11-16 contributes to the substrate binding site; the sequence is TASGKT. Residues 34-37 are interaction with substrate tRNA; that stretch reads DSLQ.

Belongs to the IPP transferase family. Monomer. It depends on Mg(2+) as a cofactor.

It carries out the reaction adenosine(37) in tRNA + dimethylallyl diphosphate = N(6)-dimethylallyladenosine(37) in tRNA + diphosphate. In terms of biological role, catalyzes the transfer of a dimethylallyl group onto the adenine at position 37 in tRNAs that read codons beginning with uridine, leading to the formation of N6-(dimethylallyl)adenosine (i(6)A). The polypeptide is tRNA dimethylallyltransferase (Onion yellows phytoplasma (strain OY-M)).